The sequence spans 107 residues: Urease subunit beta (107 aa).

It belongs to the urease beta subunit family. As to quaternary structure, heterotrimer of UreA (gamma), UreB (beta) and UreC (alpha) subunits. Three heterotrimers associate to form the active enzyme.

The protein resides in the cytoplasm. The catalysed reaction is urea + 2 H2O + H(+) = hydrogencarbonate + 2 NH4(+). It participates in nitrogen metabolism; urea degradation; CO(2) and NH(3) from urea (urease route): step 1/1. The polypeptide is Urease subunit beta (Janthinobacterium sp. (strain Marseille) (Minibacterium massiliensis)).